The chain runs to 294 residues: Beta-lactamase SME-1 (294 aa).

The first 27 residues, 1–27 (MSNKVNFKTASFLFSVCLALSAFNAHA), serve as a signal peptide directing secretion. Cysteines 72 and 242 form a disulfide. Residue serine 73 is the Nucleophile; acyl-ester intermediate of the active site. A beta-lactam contacts are provided by serine 73, lysine 76, serine 133, and asparagine 135. Glutamate 172 functions as the Proton acceptor in the catalytic mechanism. Threonine 239 serves as a coordination point for a beta-lactam.

Belongs to the class-A beta-lactamase family.

It carries out the reaction a beta-lactam + H2O = a substituted beta-amino acid. Partially inhibited by the beta-lactamase-blocking agents, clavulanic acid and tazobactam. Not inhibited by EDTA. Class A beta-lactamase which confers resistance to the beta-lactam antibiotics, including penicillins, some cephalosporins and carbapenems, to JM109 strain E.coli. Acts via hydrolysis of the beta-lactam ring. Has penicillin-, cephalosporin- and carbapenem-hydrolyzing activities. This Serratia marcescens protein is Beta-lactamase SME-1.